The sequence spans 126 residues: Topoisomerase I damage affected protein 8 (126 aa).

The PA14 domain occupies M1–G110.

Belongs to the flocculin family.

This Saccharomyces cerevisiae (strain ATCC 204508 / S288c) (Baker's yeast) protein is Topoisomerase I damage affected protein 8 (TDA8).